Consider the following 451-residue polypeptide: tRNA-2-methylthio-N(6)-dimethylallyladenosine synthase (451 aa).

One can recognise an MTTase N-terminal domain in the interval 3 to 120 (KKLFIQTHGC…LPEMVNAAGK (118 aa)). Residues cysteine 12, cysteine 49, cysteine 83, cysteine 156, cysteine 160, and cysteine 163 each coordinate [4Fe-4S] cluster. A Radical SAM core domain is found at 142-374 (RVEGAEAFVS…QRRISQQAYD (233 aa)). Residues 377-441 (LSMVGEVQRI…PNSLLGELVG (65 aa)) enclose the TRAM domain.

It belongs to the methylthiotransferase family. MiaB subfamily. In terms of assembly, monomer. [4Fe-4S] cluster serves as cofactor.

It is found in the cytoplasm. It catalyses the reaction N(6)-dimethylallyladenosine(37) in tRNA + (sulfur carrier)-SH + AH2 + 2 S-adenosyl-L-methionine = 2-methylsulfanyl-N(6)-dimethylallyladenosine(37) in tRNA + (sulfur carrier)-H + 5'-deoxyadenosine + L-methionine + A + S-adenosyl-L-homocysteine + 2 H(+). Catalyzes the methylthiolation of N6-(dimethylallyl)adenosine (i(6)A), leading to the formation of 2-methylthio-N6-(dimethylallyl)adenosine (ms(2)i(6)A) at position 37 in tRNAs that read codons beginning with uridine. The protein is tRNA-2-methylthio-N(6)-dimethylallyladenosine synthase of Marinomonas sp. (strain MWYL1).